We begin with the raw amino-acid sequence, 375 residues long: Growth/differentiation factor 8 (375 aa).

Residues 1-23 (MQKLAVYVYIYLFMQIAVDPVAL) form the signal peptide. Positions 24 to 266 (DGSSQPTENA…VTDTPKRSRR (243 aa)) are excised as a propeptide. N-linked (GlcNAc...) asparagine glycosylation occurs at Asn71. Cystine bridges form between Cys272–Cys282, Cys281–Cys340, Cys309–Cys372, and Cys313–Cys374.

Belongs to the TGF-beta family. In terms of assembly, homodimer; disulfide-linked.

It is found in the secreted. In terms of biological role, acts specifically as a negative regulator of skeletal muscle growth. The protein is Growth/differentiation factor 8 (MSTN) of Gallus gallus (Chicken).